The following is a 414-amino-acid chain: Clusterin-associated protein 1 (414 aa).

A coiled-coil region spans residues 198–291; the sequence is KTKDLLNNVA…ERFEEAKNTL (94 aa). Positions 305-414 are disordered; sequence LLKSGSNDDS…EPLDESDNDF (110 aa). 2 stretches are compositionally biased toward acidic residues: residues 312 to 328 and 360 to 389; these read DDSD…DSEL and DSDD…EDES. S314, S324, and S326 each carry phosphoserine. At S410 the chain carries Phosphoserine.

This sequence belongs to the CLUAP1 family. As to quaternary structure, interacts with CLU/clusterin. Interacts with UBXN10; the interaction is direct.

It localises to the cell projection. Its subcellular location is the cilium. The protein resides in the nucleus. Its function is as follows. Required for cilia biogenesis. Appears to function within the multiple intraflagellar transport complex B (IFT-B). Key regulator of hedgehog signaling. The protein is Clusterin-associated protein 1 (CLUAP1) of Macaca fascicularis (Crab-eating macaque).